The sequence spans 507 residues: ATP synthase subunit alpha, chloroplastic (507 aa).

170–177 serves as a coordination point for ATP; it reads GDRQTGKT.

Belongs to the ATPase alpha/beta chains family. In terms of assembly, F-type ATPases have 2 components, CF(1) - the catalytic core - and CF(0) - the membrane proton channel. CF(1) has five subunits: alpha(3), beta(3), gamma(1), delta(1), epsilon(1). CF(0) has four main subunits: a, b, b' and c.

It localises to the plastid. The protein resides in the chloroplast thylakoid membrane. It catalyses the reaction ATP + H2O + 4 H(+)(in) = ADP + phosphate + 5 H(+)(out). Its function is as follows. Produces ATP from ADP in the presence of a proton gradient across the membrane. The alpha chain is a regulatory subunit. This is ATP synthase subunit alpha, chloroplastic from Dioscorea elephantipes (Elephant's foot yam).